A 911-amino-acid polypeptide reads, in one-letter code: MDAHDGEADELPPPPPVPANVVPIKADDVESEVPANKPAKPKRFPMARPGLGRKGQPIQLLANHYKVSVKSSEEYFFHYNVILKYEDDRPVDGKGVGRKVIDKLQQTYRSELSSKDFAYDGEKSLFTIGALPQVTNEFTVVLEDVSTGKTAANGSPGGNDSPGGSDRKRVRRPYQTKTFKVELCFAAKIPMNAIAQAIKGQESENSQEALRVLDIILRQHSAKQGCLLVRQSFFHNNPNNFVDLGGGVMGCRGFHSSFRGTQSGLSLNIDVSTTMIVKPGPVIDFLLANQKVDHPDRIDWQKAKRALKNLRIRTTPVNSEFKIIGLSDRNCNEQMFSLRQRNGNNGDVDEVEVTVYDYFVKNKGIELRYSGNLPCINVGKPKRPTYFPIELCSLIPLQRYTKALSTLQRSSLVEKSRQKPQERMSVLNDALRHSNYDSDPMLRASGISIAQNFTQVEGRVLQPPKLKAGNGEDIFPRNGRWNFNNKKLIQTCSVDKWAVVNFSARCDVRNLIRDLIRNASAKGIQMAEPFDVFEESPSLRRAPVSRRVDDMFEQIKSKLPGAPKFLLCLLPERKNCEVYGPWKRKCLAEFGIVTQCLAPQRVNDQYLLNLLLKINAKLGGINSLLQIEASPSIPLVSKTPTIILGMDVSHGQPGQSDRPSIAAVVSSRQWPLISKYRASVHTQSPKLEMMSSLFKPRGTEDDGLIRESLIDFYTSSGKRKPDHVIVFRDGVSESQFTQVINIELDQIIEACKFLDEKWSPKFTVIVAQKNHHTKFFQSGSPDNVPPGTVVDKQVCHPRNYDFYMCAHAGMIGTTRPTHYHVLHDEIGFSPDDLQELVHSLSYVYQRSTTAISVVAPICYAHLAAAQVGTFLKFEDMSDASSSQGGHTSVGSVPVPELPRLHEKVRSSMFFC.

Disordered stretches follow at residues 1–51 and 149–171; these read MDAH…RPGL and KTAA…KRVR. The PAZ domain maps to 281–396; it reads PVIDFLLANQ…FPIELCSLIP (116 aa). One can recognise a Piwi domain in the interval 565 to 872; that stretch reads FLLCLLPERK…AAAQVGTFLK (308 aa).

The protein belongs to the argonaute family. Ago subfamily.

In terms of biological role, probably involved in the RNA silencing pathway. May bind to short RNAs such as microRNAs (miRNAs) or short interfering RNAs (siRNAs), and represses the translation of mRNAs which are complementary to them. The polypeptide is Protein argonaute 4B (AGO4B) (Oryza sativa subsp. japonica (Rice)).